A 257-amino-acid chain; its full sequence is Tryptophan synthase alpha chain (257 aa).

Active-site proton acceptor residues include glutamate 47 and aspartate 58.

The protein belongs to the TrpA family. Tetramer of two alpha and two beta chains.

The enzyme catalyses (1S,2R)-1-C-(indol-3-yl)glycerol 3-phosphate + L-serine = D-glyceraldehyde 3-phosphate + L-tryptophan + H2O. Its pathway is amino-acid biosynthesis; L-tryptophan biosynthesis; L-tryptophan from chorismate: step 5/5. Functionally, the alpha subunit is responsible for the aldol cleavage of indoleglycerol phosphate to indole and glyceraldehyde 3-phosphate. The protein is Tryptophan synthase alpha chain of Listeria monocytogenes serotype 4b (strain F2365).